A 150-amino-acid polypeptide reads, in one-letter code: U1 small nuclear ribonucleoprotein C (150 aa).

The segment at 4–36 (YYCDYCKSYLTHDTMSVRKSHLQGRNHIKFYCD) adopts a Matrin-type zinc-finger fold. The interval 66 to 132 (SDAKKSNGSS…GLPLPPPAVY (67 aa)) is disordered. The segment covering 80-92 (DIDKKENSSDHNK) has biased composition (basic and acidic residues). The span at 103–112 (NDNDDDDDEM) shows a compositional bias: acidic residues. The segment covering 115 to 130 (LPPPPNLSGLPLPPPA) has biased composition (pro residues).

Belongs to the U1 small nuclear ribonucleoprotein C family. As to quaternary structure, U1 snRNP is composed of the 7 core Sm proteins B/B', D1, D2, D3, E, F and G that assemble in a heptameric protein ring on the Sm site of the small nuclear RNA to form the core snRNP, and at least 3 U1 snRNP-specific proteins U1-70K, U1-A and U1-C. U1-C interacts with U1 snRNA and the 5' splice-site region of the pre-mRNA.

Its subcellular location is the nucleus. In terms of biological role, component of the spliceosomal U1 snRNP, which is essential for recognition of the pre-mRNA 5' splice-site and the subsequent assembly of the spliceosome. U1-C is directly involved in initial 5' splice-site recognition for both constitutive and regulated alternative splicing. The interaction with the 5' splice-site seems to precede base-pairing between the pre-mRNA and the U1 snRNA. Stimulates commitment or early (E) complex formation by stabilizing the base pairing of the 5' end of the U1 snRNA and the 5' splice-site region. The chain is U1 small nuclear ribonucleoprotein C from Candida albicans (strain SC5314 / ATCC MYA-2876) (Yeast).